A 242-amino-acid polypeptide reads, in one-letter code: 1-(5-phosphoribosyl)-5-[(5-phosphoribosylamino)methylideneamino] imidazole-4-carboxamide isomerase (242 aa).

Aspartate 8 acts as the Proton acceptor in catalysis. The active-site Proton donor is the aspartate 129.

It belongs to the HisA/HisF family.

It localises to the cytoplasm. The catalysed reaction is 1-(5-phospho-beta-D-ribosyl)-5-[(5-phospho-beta-D-ribosylamino)methylideneamino]imidazole-4-carboxamide = 5-[(5-phospho-1-deoxy-D-ribulos-1-ylimino)methylamino]-1-(5-phospho-beta-D-ribosyl)imidazole-4-carboxamide. It participates in amino-acid biosynthesis; L-histidine biosynthesis; L-histidine from 5-phospho-alpha-D-ribose 1-diphosphate: step 4/9. This chain is 1-(5-phosphoribosyl)-5-[(5-phosphoribosylamino)methylideneamino] imidazole-4-carboxamide isomerase, found in Clostridium botulinum (strain Kyoto / Type A2).